Consider the following 462-residue polypeptide: Phosphoglucosamine mutase (462 aa).

Catalysis depends on S112, which acts as the Phosphoserine intermediate. Positions 112, 250, 252, and 254 each coordinate Mg(2+). Position 112 is a phosphoserine (S112).

This sequence belongs to the phosphohexose mutase family. Mg(2+) serves as cofactor. Post-translationally, activated by phosphorylation.

It catalyses the reaction alpha-D-glucosamine 1-phosphate = D-glucosamine 6-phosphate. In terms of biological role, catalyzes the conversion of glucosamine-6-phosphate to glucosamine-1-phosphate. The chain is Phosphoglucosamine mutase from Parasynechococcus marenigrum (strain WH8102).